The chain runs to 316 residues: Probable thioesterase lcsE (316 aa).

Belongs to the AMT4 thioesterase family.

It functions in the pathway secondary metabolite biosynthesis. In terms of biological role, probable thioesterase; part of the gene cluster that mediates the biosynthesis of the lipopeptide antibiotics leucinostatins that show extensive biological activities, including antimalarial, antiviral, antibacterial, antifungal, and antitumor activities, as well as phytotoxic. Leucinostatin A contains nine amino acid residues, including the unusual amino acid 4-methyl-L-proline (MePro), 2-amino-6-hydroxy-4-methyl-8-oxodecanoic acid (AHyMeOA), 3-hydroxyleucine (HyLeu), alpha-aminoisobutyric acid (AIB), beta-Ala, a 4-methylhex-2-enoic acid at the N-terminus as well as a N1,N1-dimethylpropane-1,2-diamine (DPD) at the C-terminus. The biosynthesis of leucinostatins is probably initiated with the assembly of 4-methylhex-2-enoic acid by a reducing PKS. Two reducing polyketide synthases, lcsB and lcsC, have been identified in the cluster and it is not clear which is the one that assembles 4-methylhex-2-enoic acid since both contain KS, AT, DH, cMT, ER, KR and ACP domains. The polyketide residue might be transferred to the NRPS lcsA, mediated by two additional enzymes, the acyl-CoA ligase lcsD and the thioesterase lcsE. The linear polyketide carboxylic acid, which is released from PKS, is converted to a CoA thioester by lcsD, and then lcsE hydrolyzes the thiol bond and shuttles the polyketide intermediate to lcsA. The C domain of the first module catalyzed the condensation of 4-methylhex-2-enoic acid and MePro carried by domain A1, followed by successive condensations of nine amino acids to trigger the elongation of the linear peptide. A5 and A6 domains of lcsA are proposed to incorporate leucine, A2 AHyMeOA, and A3 incorporates HyLeu. A4, A7 and A8 incorporate AIB. The AHyMeOA in leucinostatin A activated by the A2 might be produced by the second PKS (lcsB or lcsC) present within the cluster. The MePro is probably produced via leucine cyclization and may originate from a separate pathway, independent of the cluster. Another nonproteinogenic amino acid, beta-Ala, could be produced by an aspartic acid decarboxylase also localized outside of the cluster. Two candidates are VFPBJ_01400 and VFPBJ_10476. The final peptide scaffold may be released by the NAD(P)H-dependent thioester reductase (TE) at the C-terminal region of lcsA. Transamination of the lcsA product by the transaminase lcsP may produce DPD at the C-terminus. Further hydroxylation steps performed alternatively by the cytochrome P450 monooxygenases lcsI, lcsK and lcsN then yield the non-methylated leucinostatins precursor. It is also possible that leucines can be hydroxylated prior to their incorporation into the peptide. Varying extents of methylation then lead to the formation of leucinostatins A and B. The sequence is that of Probable thioesterase lcsE from Purpureocillium lilacinum (Paecilomyces lilacinus).